We begin with the raw amino-acid sequence, 125 residues long: Snaclec coagulation factor IX/factor X-binding protein subunit B (125 aa).

One can recognise a C-type lectin domain in the interval 1–122 (DCSSGWTAYG…SLFGHFVCKS (122 aa)). Cystine bridges form between C2-C13, C30-C120, and C97-C112. The Ca(2+) site is built by S41 and E47.

The protein belongs to the snaclec family. Heterodimer of subunits A and B; disulfide-linked. Expressed by the venom gland.

The protein localises to the secreted. Anticoagulant protein which binds to coagulation factor IX (F9) and coagulation factor X (F10) in the presence of calcium. It may bind the gamma-carboxyglutamic acid-domain regions of factors with a 1 to 1 stoichiometry. The dissociation constant (K(d)) are 6.6 nM for factor IX (F9) and 125 nM for factor X (F10). Does not bind carbohydrates. This is Snaclec coagulation factor IX/factor X-binding protein subunit B from Echis carinatus (Saw-scaled viper).